We begin with the raw amino-acid sequence, 180 residues long: uncharacterized protein (180 aa).

The next 6 membrane-spanning stretches (helical) occupy residues 4–24 (KSNI…LSLF), 25–45 (IKNF…WLFI), 57–77 (NLLA…GIIY), 81–101 (FLDI…GILF), 124–144 (FLTL…LLIL), and 156–176 (IIRT…FYTF).

It is found in the cell membrane. This is an uncharacterized protein from Methanocaldococcus jannaschii (strain ATCC 43067 / DSM 2661 / JAL-1 / JCM 10045 / NBRC 100440) (Methanococcus jannaschii).